A 132-amino-acid chain; its full sequence is Ribonuclease P protein component 2 (132 aa).

Belongs to the eukaryotic/archaeal RNase P protein component 2 family. Consists of a catalytic RNA component and at least 4-5 protein subunits.

The protein localises to the cytoplasm. It catalyses the reaction Endonucleolytic cleavage of RNA, removing 5'-extranucleotides from tRNA precursor.. Part of ribonuclease P, a protein complex that generates mature tRNA molecules by cleaving their 5'-ends. In Methanosarcina acetivorans (strain ATCC 35395 / DSM 2834 / JCM 12185 / C2A), this protein is Ribonuclease P protein component 2.